Consider the following 185-residue polypeptide: NADH-quinone oxidoreductase subunit B (185 aa).

4 residues coordinate [4Fe-4S] cluster: Cys-38, Cys-39, Cys-104, and Cys-133.

Belongs to the complex I 20 kDa subunit family. As to quaternary structure, NDH-1 is composed of 14 different subunits. Subunits NuoB, C, D, E, F, and G constitute the peripheral sector of the complex. [4Fe-4S] cluster serves as cofactor.

It localises to the cell membrane. It catalyses the reaction a quinone + NADH + 5 H(+)(in) = a quinol + NAD(+) + 4 H(+)(out). Its function is as follows. NDH-1 shuttles electrons from NADH, via FMN and iron-sulfur (Fe-S) centers, to quinones in the respiratory chain. The immediate electron acceptor for the enzyme in this species is believed to be a menaquinone. Couples the redox reaction to proton translocation (for every two electrons transferred, four hydrogen ions are translocated across the cytoplasmic membrane), and thus conserves the redox energy in a proton gradient. The sequence is that of NADH-quinone oxidoreductase subunit B from Cutibacterium acnes (strain DSM 16379 / KPA171202) (Propionibacterium acnes).